A 393-amino-acid polypeptide reads, in one-letter code: 5-amino-6-(D-ribitylamino)uracil--L-tyrosine 4-hydroxyphenyl transferase (393 aa).

The 248-residue stretch at 71 to 318 folds into the Radical SAM core domain; sequence VTYVINRNIN…TAVSRIFLGN (248 aa). [4Fe-4S] cluster-binding residues include cysteine 85, cysteine 89, and cysteine 92.

Belongs to the radical SAM superfamily. CofH family. Consists of two subunits, CofG and CofH. [4Fe-4S] cluster serves as cofactor.

It carries out the reaction 5-amino-6-(D-ribitylamino)uracil + L-tyrosine + S-adenosyl-L-methionine = 5-amino-5-(4-hydroxybenzyl)-6-(D-ribitylimino)-5,6-dihydrouracil + 2-iminoacetate + 5'-deoxyadenosine + L-methionine + H(+). It functions in the pathway cofactor biosynthesis; coenzyme F0 biosynthesis. Catalyzes the radical-mediated synthesis of 5-amino-5-(4-hydroxybenzyl)-6-(D-ribitylimino)-5,6-dihydrouracil from 5-amino-6-(D-ribitylamino)uracil and L-tyrosine. The protein is 5-amino-6-(D-ribitylamino)uracil--L-tyrosine 4-hydroxyphenyl transferase of Trichodesmium erythraeum (strain IMS101).